We begin with the raw amino-acid sequence, 307 residues long: MDLYSIKLKVITILAGIGIALLFSLIAYGLLYYFYGLSGISIIYFLLIFVLFIDIIQWLVSPYIIGMTYRLQKVSPMSQYGYLIDIVHDAAEKNNIKEPEVYIAMRGSPNAFAYSSPLAGKRIAFTKSILDILNRDELEAVAGHELGHLKHHDVELLLAIGLIPTLIFYLGYSMIFSGFGRRNGGSFFLVAIILFILSSVFNIMILGVNRIRESYADVNSAMTIPNGAENLQNALAKIYSYSMPSKQTSNSTVNMLMFSDHIENDLGRDYRKLVEKWKNMKPPVSIFSDHPHPAKRIQILERYKNSF.

The next 2 helical transmembrane spans lie at 10–30 (VITILAGIGIALLFSLIAYGL) and 40–60 (ISIIYFLLIFVLFIDIIQWLV). H144 is a Zn(2+) binding site. E145 is an active-site residue. H148 provides a ligand contact to Zn(2+). The next 2 membrane-spanning stretches (helical) occupy residues 156–176 (LLLAIGLIPTLIFYLGYSMIF) and 187–207 (FFLVAIILFILSSVFNIMILG). E213 contacts Zn(2+).

The protein belongs to the peptidase M48B family. Requires Zn(2+) as cofactor.

It localises to the cell membrane. The protein is Protease HtpX homolog of Picrophilus torridus (strain ATCC 700027 / DSM 9790 / JCM 10055 / NBRC 100828 / KAW 2/3).